A 121-amino-acid chain; its full sequence is uncharacterized protein (121 aa).

The signal sequence occupies residues 1 to 23; the sequence is MNFSTVFQAIIAVLGLTTVTALA. N-linked (GlcNAc...) asparagine glycosylation is found at N68 and N84.

In terms of processing, N-glycosylated.

This is an uncharacterized protein from Saccharomyces cerevisiae (strain ATCC 204508 / S288c) (Baker's yeast).